The following is a 917-amino-acid chain: Protein FAN (917 aa).

The region spanning 176–247 (RLARTSFDKN…QDVRRIYKRR (72 aa)) is the GRAM domain. One can recognise a BEACH-type PH domain in the interval 189–286 (NISEKLHMEC…DRDDLYFYIA (98 aa)). Residues 290-575 (EHHVAEHTAE…QLFVTPHPRR (286 aa)) form the BEACH domain. 6 WD repeats span residues 628-658 (IHKEAVTGITVSRNGSSVFTTSQDSTLKMFS), 670-700 (FSNMALSSCLLLPGDATVITSSWDNNVYFYS), 712-740 (GHDDAVSKICWHDNRLYSASWDSTVKVWS), 761-791 (EHDVSVDTISLNAASTLLVSGTKEGTVNIWD), 803-833 (CHSGIVCDTAFSPDSRHVLSTGTDGCLNVID), and 884-914 (GHTGAVTCIWMNEQCSSIITGGEDRQIIFWK).

In terms of tissue distribution, ubiquitous.

In terms of biological role, couples the p55 TNF-receptor (TNF-R55 / TNFR1) to neutral sphingomyelinase (N-SMASE). Specifically binds to the N-smase activation domain of TNF-R55. May regulate ceramide production by N-SMASE. This chain is Protein FAN (NSMAF), found in Homo sapiens (Human).